A 148-amino-acid chain; its full sequence is Large ribosomal subunit protein bL9 (148 aa).

It belongs to the bacterial ribosomal protein bL9 family.

In terms of biological role, binds to the 23S rRNA. The sequence is that of Large ribosomal subunit protein bL9 from Chloroflexus aurantiacus (strain ATCC 29366 / DSM 635 / J-10-fl).